The chain runs to 252 residues: Flagellar brake protein YcgR (252 aa).

Residues 123-238 (QRREFYRVPT…TLATVQKYIT (116 aa)) form the PilZ domain.

Belongs to the YcgR family. In terms of assembly, monomer. Interacts with the flagellar basal bodies.

It is found in the bacterial flagellum basal body. Its function is as follows. Acts as a flagellar brake, regulating swimming and swarming in a bis-(3'-5') cyclic diguanylic acid (c-di-GMP)-dependent manner. Binds 1 c-di-GMP dimer per subunit. Increasing levels of c-di-GMP lead to decreased motility. The protein is Flagellar brake protein YcgR of Janthinobacterium sp. (strain Marseille) (Minibacterium massiliensis).